A 231-amino-acid polypeptide reads, in one-letter code: Octanoyltransferase (231 aa).

In terms of domain architecture, BPL/LPL catalytic spans 49–224; that stretch reads ADTPDEIWLL…ALQRLLPPVY (176 aa). Residues 88–95, 155–157, and 168–170 each bind substrate; these read RGGQITYH, ALG, and GLA. The active-site Acyl-thioester intermediate is cysteine 186.

This sequence belongs to the LipB family.

It is found in the cytoplasm. It catalyses the reaction octanoyl-[ACP] + L-lysyl-[protein] = N(6)-octanoyl-L-lysyl-[protein] + holo-[ACP] + H(+). The protein operates within protein modification; protein lipoylation via endogenous pathway; protein N(6)-(lipoyl)lysine from octanoyl-[acyl-carrier-protein]: step 1/2. Catalyzes the transfer of endogenously produced octanoic acid from octanoyl-acyl-carrier-protein onto the lipoyl domains of lipoate-dependent enzymes. Lipoyl-ACP can also act as a substrate although octanoyl-ACP is likely to be the physiological substrate. This chain is Octanoyltransferase, found in Aromatoleum aromaticum (strain DSM 19018 / LMG 30748 / EbN1) (Azoarcus sp. (strain EbN1)).